The primary structure comprises 466 residues: tRNA modification GTPase MnmE (466 aa).

(6S)-5-formyl-5,6,7,8-tetrahydrofolate is bound by residues arginine 24, glutamate 85, and lysine 128. One can recognise a TrmE-type G domain in the interval 224–384; it reads GLNIVLAGQP…LRTELLHLVG (161 aa). Asparagine 234 is a binding site for K(+). GTP is bound by residues 234-239, 253-259, and 278-281; these read NVGKSS, TPIAGTT, and DTAG. A Mg(2+)-binding site is contributed by serine 238. Positions 253, 255, and 258 each coordinate K(+). A Mg(2+)-binding site is contributed by threonine 259. Lysine 466 provides a ligand contact to (6S)-5-formyl-5,6,7,8-tetrahydrofolate.

This sequence belongs to the TRAFAC class TrmE-Era-EngA-EngB-Septin-like GTPase superfamily. TrmE GTPase family. Homodimer. Heterotetramer of two MnmE and two MnmG subunits. K(+) serves as cofactor.

The protein localises to the cytoplasm. Functionally, exhibits a very high intrinsic GTPase hydrolysis rate. Involved in the addition of a carboxymethylaminomethyl (cmnm) group at the wobble position (U34) of certain tRNAs, forming tRNA-cmnm(5)s(2)U34. This is tRNA modification GTPase MnmE from Herminiimonas arsenicoxydans.